The following is a 785-amino-acid chain: E3 UFM1-protein ligase 1 homolog (785 aa).

The segment at 405–483 (ASFQDQDDDG…GGGGGNKKTV (79 aa)) is disordered.

It belongs to the UFL1 family.

Its function is as follows. E3 UFM1-protein ligase that mediates ufmylation of target proteins. This Drosophila pseudoobscura pseudoobscura (Fruit fly) protein is E3 UFM1-protein ligase 1 homolog.